The sequence spans 689 residues: Glycine--tRNA ligase beta subunit (689 aa).

Belongs to the class-II aminoacyl-tRNA synthetase family. As to quaternary structure, tetramer of two alpha and two beta subunits.

It is found in the cytoplasm. The catalysed reaction is tRNA(Gly) + glycine + ATP = glycyl-tRNA(Gly) + AMP + diphosphate. In Shewanella putrefaciens (strain CN-32 / ATCC BAA-453), this protein is Glycine--tRNA ligase beta subunit.